The following is a 319-amino-acid chain: Acetyl-coenzyme A carboxylase carboxyl transferase subunit alpha (319 aa).

A CoA carboxyltransferase C-terminal domain is found at 32 to 293 (NVETEVRALR…KAVLLNELDA (262 aa)).

Belongs to the AccA family. Acetyl-CoA carboxylase is a heterohexamer composed of biotin carboxyl carrier protein (AccB), biotin carboxylase (AccC) and two subunits each of ACCase subunit alpha (AccA) and ACCase subunit beta (AccD).

The protein localises to the cytoplasm. The catalysed reaction is N(6)-carboxybiotinyl-L-lysyl-[protein] + acetyl-CoA = N(6)-biotinyl-L-lysyl-[protein] + malonyl-CoA. It participates in lipid metabolism; malonyl-CoA biosynthesis; malonyl-CoA from acetyl-CoA: step 1/1. Component of the acetyl coenzyme A carboxylase (ACC) complex. First, biotin carboxylase catalyzes the carboxylation of biotin on its carrier protein (BCCP) and then the CO(2) group is transferred by the carboxyltransferase to acetyl-CoA to form malonyl-CoA. The chain is Acetyl-coenzyme A carboxylase carboxyl transferase subunit alpha from Xanthomonas axonopodis pv. citri (strain 306).